A 520-amino-acid chain; its full sequence is Laccase-1 (520 aa).

Residues 1–21 (MSRFHSLLAFVVASLTAVAHA) form the signal peptide. Plastocyanin-like domains lie at 23–148 (IGPV…FVVY) and 160–302 (VDND…ILRY). N-linked (GlcNAc...) asparagine glycans are attached at residues N72 and N75. Residues H85, H87, H130, and H132 each contribute to the Cu cation site. 2 cysteine pairs are disulfide-bonded: C106–C509 and C138–C226. N-linked (GlcNAc...) asparagine glycans are attached at residues N229, N238, N354, and N361. One can recognise a Plastocyanin-like 3 domain in the interval 369–491 (TVPVLLQIIS…AGFAVVFAED (123 aa)). Residues H416, H419, H421, H473, C474, H475, and H479 each coordinate Cu cation.

The protein belongs to the multicopper oxidase family. In terms of assembly, homodimer. It depends on Cu cation as a cofactor.

The protein resides in the secreted. The enzyme catalyses 4 hydroquinone + O2 = 4 benzosemiquinone + 2 H2O. In terms of biological role, lignin degradation and detoxification of lignin-derived products. The polypeptide is Laccase-1 (Trametes villosa (White-rot fungus)).